Here is a 181-residue protein sequence, read N- to C-terminus: Peptide deformylase (181 aa).

Fe cation contacts are provided by C104 and H146. Residue E147 is part of the active site. Fe cation is bound at residue H150.

It belongs to the polypeptide deformylase family. Fe(2+) is required as a cofactor.

It carries out the reaction N-terminal N-formyl-L-methionyl-[peptide] + H2O = N-terminal L-methionyl-[peptide] + formate. Its function is as follows. Removes the formyl group from the N-terminal Met of newly synthesized proteins. Requires at least a dipeptide for an efficient rate of reaction. N-terminal L-methionine is a prerequisite for activity but the enzyme has broad specificity at other positions. The polypeptide is Peptide deformylase (Helicobacter hepaticus (strain ATCC 51449 / 3B1)).